Consider the following 491-residue polypeptide: Cytochrome P450 2B3 (491 aa).

Cysteine 436 contributes to the heme binding site.

This sequence belongs to the cytochrome P450 family. Requires heme as cofactor. As to expression, liver. Not found in the lung, kidney and prostate.

It localises to the endoplasmic reticulum membrane. The protein resides in the microsome membrane. The enzyme catalyses an organic molecule + reduced [NADPH--hemoprotein reductase] + O2 = an alcohol + oxidized [NADPH--hemoprotein reductase] + H2O + H(+). Cytochromes P450 are a group of heme-thiolate monooxygenases. In liver microsomes, this enzyme is involved in an NADPH-dependent electron transport pathway. It oxidizes a variety of structurally unrelated compounds, including steroids, fatty acids, and xenobiotics. In Rattus norvegicus (Rat), this protein is Cytochrome P450 2B3 (Cyp2b3).